The sequence spans 156 residues: Ribosome maturation factor RimP (156 aa).

Belongs to the RimP family.

It is found in the cytoplasm. Its function is as follows. Required for maturation of 30S ribosomal subunits. This Treponema pallidum (strain Nichols) protein is Ribosome maturation factor RimP.